A 255-amino-acid chain; its full sequence is Small ribosomal subunit protein eS1 (255 aa).

Ala2 carries the N-acetylalanine; partial modification.

It belongs to the eukaryotic ribosomal protein eS1 family. Component of the small ribosomal subunit. Mature ribosomes consist of a small (40S) and a large (60S) subunit. The 40S subunit contains about 33 different proteins and 1 molecule of RNA (18S). The 60S subunit contains about 49 different proteins and 3 molecules of RNA (25S, 5.8S and 5S).

It localises to the cytoplasm. This is Small ribosomal subunit protein eS1 from Candida glabrata (strain ATCC 2001 / BCRC 20586 / JCM 3761 / NBRC 0622 / NRRL Y-65 / CBS 138) (Yeast).